The primary structure comprises 1450 residues: ABC transporter G family member 37 (1450 aa).

Positions 175 to 447 (VKLTGAKTHE…FEDCGFRCPE (273 aa)) constitute an ABC transporter 1 domain. 207–214 (GPPSCGKT) contacts ATP. Residues 525-737 (ELFIACISRE…GEIGLSVNEF (213 aa)) enclose the ABC transmembrane type-2 1 domain. The next 6 membrane-spanning stretches (helical) occupy residues 544–564 (VYIFKTAQLVMAAFITMTVFI), 581–601 (ALFFALIILLVDGFPELSMTA), 615–635 (FYPAWAYAIPATVLKVPLSFF), 661–681 (FILLFAVHFTSISMFRCLAAI), 687–707 (ASITAGSFGILFTFVFAGFVI), and 773–793 (LCALLGFTVLFNIIFTLALTF). The segment at 810 to 838 (SELQGTEKSTEDSSVRKKTTDSPVKTEEE) is disordered. Positions 817 to 838 (KSTEDSSVRKKTTDSPVKTEEE) are enriched in basic and acidic residues. An ABC transporter 2 domain is found at 850–1103 (VTFQDLNYFV…IIEYFESVPE (254 aa)). 895–902 (GVSGAGKT) provides a ligand contact to ATP. Residues 1175 to 1389 (GQFKSILWKM…TLNGFISSQY (215 aa)) enclose the ABC transmembrane type-2 2 domain. Helical transmembrane passes span 1194–1214 (YNLMRMMHTLVSSLIFGALFW), 1226–1246 (MFTVFGAIYGLVLFLGINNCA), 1282–1302 (IPYIFIQAAEFVIVTYPMIGF), 1313–1333 (LYSMFCSLLTFNYLAMFLVSI), 1339–1359 (VAAILQSLFYVGFNLFSGFLI), 1365–1385 (PGWWIWLYYLTPTSWTLNGFI), and 1422–1442 (VTAVVQIAFPIALASMFAFFV).

This sequence belongs to the ABC transporter superfamily. ABCG family. PDR (TC 3.A.1.205) subfamily. Expressed in roots and, to a lower extent, in seedlings.

Its subcellular location is the cell membrane. Together with ABCG36, regulates auxin homeostasis and responses by playing a dual role in coumarin (and derivatives) and in the auxin precursor indole 3-butyric acid (IBA) efflux transport, thus influencing roots and root hairs development. Mediates coumarin exudation in the rhizosphere, especially in iron (Fe) deficient conditions, with a strong specificity for highly oxygenated compounds such as scopoletin and derivatives, dihydroxyscopoletin, esculetin, fraxin, fraxetin and esculin; these molecules improve plant Fe nutrition. Involved in the cellular detoxification of xenobiotics by promoting the excretion of some auxinic herbicides including 2,4-dichlorophenoxyacetic acid (2,4-D), 4-(2,4-dichlorophenoxy)butyric acid (2,4-DB) and other members of the phenoxyalkanoic acid family as well as the polar auxin transport inhibitor, napthylphthalamic acid (NPA). May be a general defense protein. The polypeptide is ABC transporter G family member 37 (Arabidopsis thaliana (Mouse-ear cress)).